The sequence spans 358 residues: Probable D-xylulose reductase A (358 aa).

Residues Cys47, His72, and Glu73 each coordinate Zn(2+). 182–187 (GAGPVG) provides a ligand contact to NAD(+).

It belongs to the zinc-containing alcohol dehydrogenase family. Zn(2+) serves as cofactor.

It carries out the reaction xylitol + NAD(+) = D-xylulose + NADH + H(+). The protein operates within carbohydrate degradation; L-arabinose degradation via L-arabinitol; D-xylulose 5-phosphate from L-arabinose (fungal route): step 4/5. Functionally, xylitol dehydrogenase which catalyzes the conversion of xylitol to D-xylulose. Xylose is a major component of hemicelluloses such as xylan. Most fungi utilize D-xylose via three enzymatic reactions, xylose reductase (XR), xylitol dehydrogenase (XDH), and xylulokinase, to form xylulose 5-phosphate, which enters pentose phosphate pathway. The protein is Probable D-xylulose reductase A (xdhA) of Aspergillus fumigatus (strain CBS 144.89 / FGSC A1163 / CEA10) (Neosartorya fumigata).